The chain runs to 166 residues: CDP-archaeol synthase (166 aa).

The next 5 helical transmembrane spans lie at 7–27 (LLLSILIYLPAFVANGSGPFI), 55–75 (LIVALTFGTTVGVIISKFFTA), 78–98 (TLISFLESLFAMIGDMIGAFI), 116–136 (LDFVLGASLILVLMRVNITWY), and 138–158 (FLFICGLAFFLHQGTNYVAYL).

The protein belongs to the CDP-archaeol synthase family. Mg(2+) is required as a cofactor.

The protein localises to the cell membrane. It carries out the reaction 2,3-bis-O-(geranylgeranyl)-sn-glycerol 1-phosphate + CTP + H(+) = CDP-2,3-bis-O-(geranylgeranyl)-sn-glycerol + diphosphate. The protein operates within membrane lipid metabolism; glycerophospholipid metabolism. In terms of biological role, catalyzes the formation of CDP-2,3-bis-(O-geranylgeranyl)-sn-glycerol (CDP-archaeol) from 2,3-bis-(O-geranylgeranyl)-sn-glycerol 1-phosphate (DGGGP) and CTP. This reaction is the third ether-bond-formation step in the biosynthesis of archaeal membrane lipids. In Saccharolobus islandicus (strain L.S.2.15 / Lassen #1) (Sulfolobus islandicus), this protein is CDP-archaeol synthase.